The primary structure comprises 689 residues: Glycine--tRNA ligase beta subunit (689 aa).

It belongs to the class-II aminoacyl-tRNA synthetase family. In terms of assembly, tetramer of two alpha and two beta subunits.

It localises to the cytoplasm. It catalyses the reaction tRNA(Gly) + glycine + ATP = glycyl-tRNA(Gly) + AMP + diphosphate. The polypeptide is Glycine--tRNA ligase beta subunit (Aeromonas hydrophila subsp. hydrophila (strain ATCC 7966 / DSM 30187 / BCRC 13018 / CCUG 14551 / JCM 1027 / KCTC 2358 / NCIMB 9240 / NCTC 8049)).